The following is a 433-amino-acid chain: Adenylosuccinate synthetase (433 aa).

GTP is bound by residues 11 to 17 and 39 to 41; these read GDEGKGK and GHT. The Proton acceptor role is filled by Asp12. Mg(2+) is bound by residues Asp12 and Gly39. IMP-binding positions include 12–15, 37–40, Thr134, Arg148, Asn230, Thr245, and Arg309; these read DEGK and NAGH. His40 (proton donor) is an active-site residue. 305–311 is a binding site for substrate; that stretch reads VTTGRKR. GTP contacts are provided by residues Arg311, 337–339, and 419–421; these read KLD and GTG.

It belongs to the adenylosuccinate synthetase family. Homodimer. It depends on Mg(2+) as a cofactor.

It localises to the cytoplasm. The enzyme catalyses IMP + L-aspartate + GTP = N(6)-(1,2-dicarboxyethyl)-AMP + GDP + phosphate + 2 H(+). Its pathway is purine metabolism; AMP biosynthesis via de novo pathway; AMP from IMP: step 1/2. Functionally, plays an important role in the de novo pathway and in the salvage pathway of purine nucleotide biosynthesis. Catalyzes the first committed step in the biosynthesis of AMP from IMP. This Saccharomyces cerevisiae (strain YJM789) (Baker's yeast) protein is Adenylosuccinate synthetase.